The sequence spans 523 residues: 2-isopropylmalate synthase (523 aa).

A Pyruvate carboxyltransferase domain is found at 5 to 267 (VIIFDTTLRD…HTAINHQEIW (263 aa)). Mn(2+)-binding residues include D14, H202, H204, and N238. Residues 392–523 (RLDYFSVQSS…QHNENNKETV (132 aa)) are regulatory domain.

The protein belongs to the alpha-IPM synthase/homocitrate synthase family. LeuA type 1 subfamily. Homodimer. The cofactor is Mn(2+).

The protein resides in the cytoplasm. It catalyses the reaction 3-methyl-2-oxobutanoate + acetyl-CoA + H2O = (2S)-2-isopropylmalate + CoA + H(+). It functions in the pathway amino-acid biosynthesis; L-leucine biosynthesis; L-leucine from 3-methyl-2-oxobutanoate: step 1/4. Functionally, catalyzes the condensation of the acetyl group of acetyl-CoA with 3-methyl-2-oxobutanoate (2-ketoisovalerate) to form 3-carboxy-3-hydroxy-4-methylpentanoate (2-isopropylmalate). This is 2-isopropylmalate synthase from Shigella dysenteriae serotype 1 (strain Sd197).